We begin with the raw amino-acid sequence, 412 residues long: G-protein coupled receptor homolog UL33 (412 aa).

Over 1–29 (MDTIIHNSTRNNTPPHINDTCNMTGPLFA) the chain is Virion surface. N-linked (GlcNAc...) asparagine; by host glycosylation is found at asparagine 7, asparagine 18, and asparagine 22. Residues 30 to 54 (IRTTEAVLNTFIIFVGGPLNAIVLI) traverse the membrane as a helical segment. The Intravirion segment spans residues 55-70 (TQLLTNRVLGYSTPTI). The helical transmembrane segment at 71-95 (YMTNLYSTNFLTLTVLPFIVLSNQW) threads the bilayer. Topologically, residues 96-102 (LLPAGVA) are virion surface. Residues 103–129 (SCKFLSVIYYSSCTVGFATVALIAADR) traverse the membrane as a helical segment. Cysteine 104 and cysteine 188 are oxidised to a cystine. Over 130–138 (YRVLHKRTY) the chain is Intravirion. A helical transmembrane segment spans residues 139 to 160 (ARQSYRSTYMILLLTWLAGLIF). Topologically, residues 161-203 (SVPAAVYTTVVMHHDANDTNNTNGHATCVLYFVAEEVHTVLLS) are virion surface. N-linked (GlcNAc...) asparagine; by host glycans are attached at residues asparagine 177 and asparagine 180. Residues 204-224 (WKVLLTMVWGAAPVIMMTWFY) traverse the membrane as a helical segment. Residues 225 to 240 (AFFYSTVQRTSQKQRS) are Intravirion-facing. A helical membrane pass occupies residues 241-267 (RTLTFVSVLLISFVALQTPYVSLMIFN). The Virion surface segment spans residues 268–281 (SYATTAWPMQCEHL). The chain crosses the membrane as a helical span at residues 282-305 (TLRRTIGTLARVVPHLHCLINPIL). Residues 306–412 (YALLGHDFLQ…SQSHHNLSGV (107 aa)) are Intravirion-facing. Positions 377 to 412 (NFPSGTWKGGQKTASNDTSTKIPHRLSQSHHNLSGV) are disordered. Residues 388–397 (KTASNDTSTK) show a composition bias toward polar residues.

This sequence belongs to the G-protein coupled receptor 1 family. Heterodimerizes with US28.

The protein localises to the virion. Its subcellular location is the host cell membrane. The protein resides in the host cytoplasm. Its function is as follows. G-protein-coupled receptor (vGPCR) that constitutively activates multiple oncogenic signaling pathways including STAT3, AP-1, phospholipase C, NF-kappa-B or cAMP-responsive element (CRE) pathways. Plays an important role in viral reactivation from latency through activation of host CREB1, facilitating its recruitment to the viral major immediate early (MIE) genes. In turn, expression of the MIE-driven genes such as UL123 are de-repressed. Also facilitates virus dissemination via the extracellular and cell-to-cell route. This is G-protein coupled receptor homolog UL33 (UL33) from Human cytomegalovirus (strain AD169) (HHV-5).